The chain runs to 129 residues: Small ribosomal subunit protein uS11 (129 aa).

This sequence belongs to the universal ribosomal protein uS11 family. In terms of assembly, part of the 30S ribosomal subunit. Interacts with proteins S7 and S18. Binds to IF-3.

In terms of biological role, located on the platform of the 30S subunit, it bridges several disparate RNA helices of the 16S rRNA. Forms part of the Shine-Dalgarno cleft in the 70S ribosome. The sequence is that of Small ribosomal subunit protein uS11 from Geobacillus sp. (strain WCH70).